A 362-amino-acid chain; its full sequence is MGVGVLEKLSRKTGVIVGDDVLRLFEHAQQNNYAIPAVNVTSSSTVVASLEAARDQNCPIVLQLSQGGAAYFAGKGVSNDGQQASIAGGIAAAHYIRSLAPAYGIPVVLHTDHCAKKLLPWLDGLLDEDERYFKLHGEPLFSSHMIDLSEEPVDYNIQTTAAYLKRAAPMKQWLEMEIGITGGEEDGVNNEDVDNNSLYTQPEDILAIHKALSPISPYFSIAAGFGNVHGVYKPGNVKLHPELLKKHQAYVKEKIGSNKDKPVFFVFHGGSGSSKEEYKEAISYGVVKVNVDTDMQFAYMSGIRDYILKKKDYLMTAVGNPEGEDKPNKKSFDPRVWVREGEKTMSQRVKVALEDFNTAGQL.

Serine 65 is a D-glyceraldehyde 3-phosphate binding site. Catalysis depends on aspartate 112, which acts as the Proton donor. Positions 113, 147, 177, and 229 each coordinate Zn(2+). Position 230 (glycine 230) interacts with dihydroxyacetone phosphate. Histidine 268 serves as a coordination point for Zn(2+). Residues 269-271 (GGS) and 290-293 (NVDT) contribute to the dihydroxyacetone phosphate site.

It belongs to the class II fructose-bisphosphate aldolase family. Homodimer. Requires Zn(2+) as cofactor.

It catalyses the reaction beta-D-fructose 1,6-bisphosphate = D-glyceraldehyde 3-phosphate + dihydroxyacetone phosphate. The protein operates within carbohydrate degradation; glycolysis; D-glyceraldehyde 3-phosphate and glycerone phosphate from D-glucose: step 4/4. In terms of biological role, catalyzes the aldol condensation of dihydroxyacetone phosphate (DHAP or glycerone-phosphate) with glyceraldehyde 3-phosphate (G3P) to form fructose 1,6-bisphosphate (FBP) in gluconeogenesis and the reverse reaction in glycolysis. The chain is Fructose-bisphosphate aldolase (fbaA) from Aspergillus oryzae (strain ATCC 42149 / RIB 40) (Yellow koji mold).